We begin with the raw amino-acid sequence, 557 residues long: Carboxypeptidase Y homolog A (557 aa).

The first 17 residues, 1–17, serve as a signal peptide directing secretion; the sequence is MRVLPAAMLVGAATAAV. The propeptide occupies 18-138; that stretch reads PPFQQVLGGN…KLEAYDLRVK (121 aa). 5 disulfide bridges follow: C193–C433, C327–C341, C351–C374, C358–C367, and C396–C403. N224 carries an N-linked (GlcNAc...) asparagine glycan. S280 is an active-site residue. Residue D472 is part of the active site. N-linked (GlcNAc...) asparagine glycosylation occurs at N523. Residue H534 is part of the active site.

This sequence belongs to the peptidase S10 family.

Its subcellular location is the vacuole. The enzyme catalyses Release of a C-terminal amino acid with broad specificity.. Its function is as follows. Vacuolar carboxypeptidase involved in degradation of small peptides. Digests preferentially peptides containing an aliphatic or hydrophobic residue in P1' position, as well as methionine, leucine or phenylalanine in P1 position of ester substrate. The protein is Carboxypeptidase Y homolog A (cpyA) of Aspergillus niger (strain ATCC MYA-4892 / CBS 513.88 / FGSC A1513).